The sequence spans 311 residues: T-cell acute lymphocytic leukemia protein 1 homolog (311 aa).

Residues 1–14 (MTMDRPPAPPPPSS) are compositionally biased toward pro residues. A disordered region spans residues 1-67 (MTMDRPPAPP…RPSPGPPAAA (67 aa)). The span at 15 to 25 (DPRDARRHDPE) shows a compositional bias: basic and acidic residues. In terms of domain architecture, bHLH spans 179-231 (VRRIFTNSRERWRQQNVNGAFAELRKLIPTHPPDKKLSKNEILRLAMKYINFL). Residues 265–311 (SPNSSCGSSLDGAASPDSFTEEHDTLDSKHARNLHHAILPVEGSAQR) are disordered. A compositionally biased stretch (basic and acidic residues) spans 284 to 294 (TEEHDTLDSKH).

In terms of assembly, efficient DNA binding requires dimerization with another bHLH protein. Forms heterodimers with TCF3. In terms of processing, phosphorylated on serine residues.

It is found in the nucleus. In terms of biological role, implicated in the genesis of hemopoietic malignancies. It may play an important role in hemopoietic differentiation. The sequence is that of T-cell acute lymphocytic leukemia protein 1 homolog (TAL1) from Gallus gallus (Chicken).